The following is a 170-amino-acid chain: J domain-containing protein (170 aa).

Residues Asp-17–Arg-82 form the J domain. The disordered stretch occupies residues Gln-101–Ile-170. Over residues Asn-110 to Pro-120 the composition is skewed to basic and acidic residues. 2 stretches are compositionally biased toward low complexity: residues Gly-121–Gly-135 and Gly-142–Gly-153.

This is J domain-containing protein (jdp) from Manduca sexta (Tobacco hawkmoth).